The chain runs to 947 residues: DNA polymerase (947 aa).

This sequence belongs to the DNA polymerase type-B family.

It catalyses the reaction DNA(n) + a 2'-deoxyribonucleoside 5'-triphosphate = DNA(n+1) + diphosphate. The protein is DNA polymerase of Red sea bream iridovirus (RSIV).